Here is a 247-residue protein sequence, read N- to C-terminus: Type II restriction enzyme SmaI (247 aa).

Requires Mg(2+) as cofactor. K(+) is required as a cofactor.

It carries out the reaction Endonucleolytic cleavage of DNA to give specific double-stranded fragments with terminal 5'-phosphates.. Its function is as follows. A P subtype restriction enzyme that recognizes the double-stranded sequence 5'-CCCGGG-3' and cleaves after C-3. This is Type II restriction enzyme SmaI (smaIR) from Serratia marcescens.